Consider the following 237-residue polypeptide: MTAALSSEISLHPLLDNLPSSASTTTKQEEPSLPALPITLICHCPPSSSPGPIKVTLTNQILHNHACGCSKCWKPSGALFSVVGVVPSSGLSVIANAEKLEVVDENATIQRWKCKECGVHLYGRIEKQHPFRGLDFVHGELALGQSGGSEGEGENEGGGLGEGKVEFAAFVSSIIEGGFEPHAHANGDEGKGGNIKQVRDRLREIFGEKVYDCLSPSLMDVIAEWEGRRSGKLKAVL.

One can recognise a CENP-V/GFA domain in the interval 38–152 (ITLICHCPPS…LGQSGGSEGE (115 aa)). Cys42, Cys44, Cys67, Cys69, Cys72, Cys114, and Cys117 together coordinate Zn(2+).

This sequence belongs to the Gfa family. The cofactor is Zn(2+).

It carries out the reaction S-(hydroxymethyl)glutathione = glutathione + formaldehyde. The protein operates within one-carbon metabolism; formaldehyde degradation; formate from formaldehyde (glutathione route): step 1/3. Functionally, catalyzes the condensation of formaldehyde and glutathione to S-hydroxymethylglutathione. The chain is Putative glutathione-dependent formaldehyde-activating enzyme from Sordaria macrospora (strain ATCC MYA-333 / DSM 997 / K(L3346) / K-hell).